The chain runs to 467 residues: MKSTVEHLSPTRVRINVEVPFDELKPNFDRAYKALAQQVRIPGFRPGKVPARVLESRIGRGPVLDEVVNESVPAKYLEAVNSSEVRTLGRPDIEVTKIEDGDVIEFKAEVDVRPEITVPAFGELKVSVDDVEVTEEEVNEQLDELRARFGTLAGVERPAQQGDFVSIDLSATVDGQEVEEAQTSGLSYEIGSGQLIDGIDEALIGASEGETRTFTTNLVAGEHAGKDAEVTVKLNSVKERHLPEVDDEFAQMASEFDSVDELLSDLRERLGRVKRMQQGMQARDKVLEALLETVEVPLPEKVVESEIDVRKHDAIHPFDHDEDRFGEWLEQQGQTREQFEDETREEAEKAVRTQLVLDTIADAEDVSVSDNELTERIIYQAQRFGVSPDQYVQQAQQSGQLGAIYADVRRSKALFSVVRQATVTDEEGNELDLDELFGTQAGEEQGEQAEGTEATDEQSAKADAKAE.

A PPIase FKBP-type domain is found at 162–243; the sequence is GDFVSIDLSA…LNSVKERHLP (82 aa). Over residues 426-435 the composition is skewed to acidic residues; the sequence is EEGNELDLDE. Positions 426 to 467 are disordered; the sequence is EEGNELDLDELFGTQAGEEQGEQAEGTEATDEQSAKADAKAE. The span at 436-452 shows a compositional bias: low complexity; that stretch reads LFGTQAGEEQGEQAEGT. Over residues 458–467 the composition is skewed to basic and acidic residues; the sequence is QSAKADAKAE.

The protein belongs to the FKBP-type PPIase family. Tig subfamily.

It localises to the cytoplasm. It catalyses the reaction [protein]-peptidylproline (omega=180) = [protein]-peptidylproline (omega=0). Functionally, involved in protein export. Acts as a chaperone by maintaining the newly synthesized protein in an open conformation. Functions as a peptidyl-prolyl cis-trans isomerase. In Saccharopolyspora erythraea (strain ATCC 11635 / DSM 40517 / JCM 4748 / NBRC 13426 / NCIMB 8594 / NRRL 2338), this protein is Trigger factor.